Here is a 346-residue protein sequence, read N- to C-terminus: Glycerol-3-phosphate dehydrogenase [NAD(P)+] (346 aa).

Positions 15, 16, 36, and 110 each coordinate NADPH. Sn-glycerol 3-phosphate-binding residues include K110, G139, and S141. A143 serves as a coordination point for NADPH. Sn-glycerol 3-phosphate contacts are provided by K194, D247, S257, R258, and N259. The Proton acceptor role is filled by K194. NADPH is bound at residue R258. Residues V282 and E284 each contribute to the NADPH site.

It belongs to the NAD-dependent glycerol-3-phosphate dehydrogenase family.

It localises to the cytoplasm. It catalyses the reaction sn-glycerol 3-phosphate + NAD(+) = dihydroxyacetone phosphate + NADH + H(+). The enzyme catalyses sn-glycerol 3-phosphate + NADP(+) = dihydroxyacetone phosphate + NADPH + H(+). It functions in the pathway membrane lipid metabolism; glycerophospholipid metabolism. Functionally, catalyzes the reduction of the glycolytic intermediate dihydroxyacetone phosphate (DHAP) to sn-glycerol 3-phosphate (G3P), the key precursor for phospholipid synthesis. This is Glycerol-3-phosphate dehydrogenase [NAD(P)+] from Xylella fastidiosa (strain M23).